A 427-amino-acid chain; its full sequence is Peptidase B (427 aa).

Mn(2+)-binding residues include Lys-195 and Asp-200. Residue Lys-207 is part of the active site. Mn(2+) is bound by residues Asp-218, Asp-277, and Glu-279. Arg-281 is a catalytic residue.

The protein belongs to the peptidase M17 family. Homohexamer. Requires Mn(2+) as cofactor.

It is found in the cytoplasm. The catalysed reaction is Release of an N-terminal amino acid, Xaa, from a peptide or arylamide. Xaa is preferably Glu or Asp but may be other amino acids, including Leu, Met, His, Cys and Gln.. Probably plays an important role in intracellular peptide degradation. This Escherichia coli (strain SMS-3-5 / SECEC) protein is Peptidase B.